The chain runs to 79 residues: Anti-insect Ac4 (79 aa).

The first 17 residues, 1-17 (MISLSLLLMIGVESVRD), serve as a signal peptide directing secretion. An LCN-type CS-alpha/beta domain is found at 18–77 (GYIVDFKNCVYRCVPPCDGLCKKNGGKGGSCSFLIGSGLACWCNALPDNVPIKDPLHKCP). Disulfide bonds link cysteine 26–cysteine 76, cysteine 30–cysteine 48, cysteine 34–cysteine 58, and cysteine 38–cysteine 60.

The protein belongs to the long (4 C-C) scorpion toxin superfamily. Sodium channel inhibitor family. Alpha subfamily. As to expression, expressed by the venom gland.

It localises to the secreted. Its function is as follows. Alpha toxins bind voltage-independently at site-3 of sodium channels (Nav) and inhibit the inactivation of the activated channels, thereby blocking neuronal transmission. This protein is weakly toxic against insects (ED(50)&gt;2 ug per 100 mg of blowfly larvae), but is inactive against mammalian sodium channels (rNav1.2a, and rNav1.4). This is Anti-insect Ac4 from Androctonus crassicauda (Arabian fat-tailed scorpion).